The chain runs to 871 residues: Coatomer subunit gamma-2 (871 aa).

The segment covering 1 to 11 has biased composition (basic and acidic residues); the sequence is MIKKFDKKDEE. Positions 1 to 20 are disordered; the sequence is MIKKFDKKDEESGSGSNPFR. HEAT repeat units lie at residues 64–101, 283–320, 321–355, 356–392, 395–430, and 467–504; these read TEAT…ISED, RELA…KHPS, AVTA…GSES, SVDR…KYPR, SVMM…ENPE, and PVPS…QNEN. T594 bears the Phosphothreonine mark.

Belongs to the COPG family. Oligomeric complex. Binds to CDC42. Interacts with JAGN1. Interacts with TMED10 (via cytoplasmic domain).

It localises to the cytoplasm. The protein resides in the cytosol. It is found in the golgi apparatus membrane. Its subcellular location is the cytoplasmic vesicle. The protein localises to the COPI-coated vesicle membrane. Its function is as follows. The coatomer is a cytosolic protein complex that binds to dilysine motifs and reversibly associates with Golgi non-clathrin-coated vesicles, which further mediate biosynthetic protein transport from the ER, via the Golgi up to the trans Golgi network. Coatomer complex is required for budding from Golgi membranes, and is essential for the retrograde Golgi-to-ER transport of dilysine-tagged proteins. In mammals, the coatomer can only be recruited by membranes associated to ADP-ribosylation factors (ARFs), which are small GTP-binding proteins; the complex also influences the Golgi structural integrity, as well as the processing, activity, and endocytic recycling of LDL receptors. This is Coatomer subunit gamma-2 (COPG2) from Bos taurus (Bovine).